The sequence spans 210 residues: N-(5'-phosphoribosyl)anthranilate isomerase (210 aa).

This sequence belongs to the TrpF family.

It carries out the reaction N-(5-phospho-beta-D-ribosyl)anthranilate = 1-(2-carboxyphenylamino)-1-deoxy-D-ribulose 5-phosphate. It functions in the pathway amino-acid biosynthesis; L-tryptophan biosynthesis; L-tryptophan from chorismate: step 3/5. The polypeptide is N-(5'-phosphoribosyl)anthranilate isomerase (Nostoc punctiforme (strain ATCC 29133 / PCC 73102)).